A 423-amino-acid chain; its full sequence is Structure-specific endonuclease subunit SLX1 (423 aa).

In terms of domain architecture, GIY-YIG spans 23 to 105 (AFYCCYLLRS…QNTKVSRHAD (83 aa)). Disordered regions lie at residues 300–334 (RRRR…DALQ) and 365–406 (AHRP…LGLQ).

This sequence belongs to the SLX1 family. Forms a heterodimer with SLX4. The cofactor is a divalent metal cation.

The protein resides in the nucleus. In terms of biological role, catalytic subunit of the SLX1-SLX4 structure-specific endonuclease that resolves DNA secondary structures generated during DNA repair and recombination. Has endonuclease activity towards branched DNA substrates, introducing single-strand cuts in duplex DNA close to junctions with ss-DNA. This Paracoccidioides brasiliensis (strain Pb03) protein is Structure-specific endonuclease subunit SLX1.